The primary structure comprises 253 residues: Small ribosomal subunit protein uS2 (253 aa).

Belongs to the universal ribosomal protein uS2 family.

This is Small ribosomal subunit protein uS2 from Hahella chejuensis (strain KCTC 2396).